We begin with the raw amino-acid sequence, 1049 residues long: Exotoxin PaxA (1049 aa).

4 consecutive transmembrane segments (helical) span residues 246–266, 311–331, 375–395, and 397–417; these read GLGL…FTLA, GPAA…LSFL, ITTI…ASAG, and LVGA…SGIL. Hemolysin-type calcium-binding repeat units follow at residues 744–761, 762–779, 780–797, 798–815, 826–843, and 844–861; these read KGSK…DDLL, NGND…NDEL, RGDN…NDKL, FGGN…DDEL, RGGK…SDFL, and DGGE…NDFY.

This sequence belongs to the RTX prokaryotic toxin (TC 1.C.11) family.

Its subcellular location is the secreted. It localises to the host cell membrane. Functionally, paxA is associated with abortion cases in swine and septicemia in young piglets. Shows cohemolytic activity with the sphingomyelinase of S.aureus but is devoid of direct hemolytic activity. This Pasteurella aerogenes protein is Exotoxin PaxA (paxA).